A 338-amino-acid polypeptide reads, in one-letter code: Glycerol-3-phosphate dehydrogenase [NAD(P)+] (338 aa).

Residues Ser13, Trp14, and Lys108 each contribute to the NADPH site. 3 residues coordinate sn-glycerol 3-phosphate: Lys108, Gly139, and Ser141. Ala143 is an NADPH binding site. Sn-glycerol 3-phosphate-binding residues include Lys194, Asp247, Ser257, Arg258, and Asn259. The Proton acceptor role is filled by Lys194. Position 258 (Arg258) interacts with NADPH. Residues Val282 and Glu284 each coordinate NADPH.

It belongs to the NAD-dependent glycerol-3-phosphate dehydrogenase family.

The protein resides in the cytoplasm. It carries out the reaction sn-glycerol 3-phosphate + NAD(+) = dihydroxyacetone phosphate + NADH + H(+). The enzyme catalyses sn-glycerol 3-phosphate + NADP(+) = dihydroxyacetone phosphate + NADPH + H(+). The protein operates within membrane lipid metabolism; glycerophospholipid metabolism. Functionally, catalyzes the reduction of the glycolytic intermediate dihydroxyacetone phosphate (DHAP) to sn-glycerol 3-phosphate (G3P), the key precursor for phospholipid synthesis. The polypeptide is Glycerol-3-phosphate dehydrogenase [NAD(P)+] (Streptococcus pneumoniae (strain Hungary19A-6)).